We begin with the raw amino-acid sequence, 570 residues long: Proline--tRNA ligase (570 aa).

This sequence belongs to the class-II aminoacyl-tRNA synthetase family. ProS type 1 subfamily. Homodimer.

Its subcellular location is the cytoplasm. It carries out the reaction tRNA(Pro) + L-proline + ATP = L-prolyl-tRNA(Pro) + AMP + diphosphate. Functionally, catalyzes the attachment of proline to tRNA(Pro) in a two-step reaction: proline is first activated by ATP to form Pro-AMP and then transferred to the acceptor end of tRNA(Pro). As ProRS can inadvertently accommodate and process non-cognate amino acids such as alanine and cysteine, to avoid such errors it has two additional distinct editing activities against alanine. One activity is designated as 'pretransfer' editing and involves the tRNA(Pro)-independent hydrolysis of activated Ala-AMP. The other activity is designated 'posttransfer' editing and involves deacylation of mischarged Ala-tRNA(Pro). The misacylated Cys-tRNA(Pro) is not edited by ProRS. This chain is Proline--tRNA ligase, found in Syntrophomonas wolfei subsp. wolfei (strain DSM 2245B / Goettingen).